We begin with the raw amino-acid sequence, 344 residues long: MRVAVLPGDGIGPEVTEAALRVLKALDEREGLGLTYETFPFGGAAIDGYGEPFPEVTRKGVEAAEAVLLGSVGGPKWDALPRKIRPESGLLALRKSQDLFANLRPAKVFPGLERLSPLKEEIARGVDVLIVRELTGGIYFGEPRGMSEAEAWNTERYSKPEVERVAKVAFEAARKRRRHLTSVDKANVLEVGEFWRKTVEEVHKGYPDVALDHQYVDAMAMHLVKNPARFDVVVTGNIFGDILSDLASVLPGSLGLLPSASLGRGTPVFEPVHGSAPDIAGKGIANPTAAILSAAMMLEHAFGLVELARRVEAAVAKALRETPPPDLGGSAGTQAFTEEVLRHL.

Position 74–87 (Gly-74–Glu-87) interacts with NAD(+). Positions 94, 104, 132, and 217 each coordinate substrate. 3 residues coordinate Mg(2+): Asp-217, Asp-241, and Asp-245. Gly-274–Asn-286 is a binding site for NAD(+).

Belongs to the isocitrate and isopropylmalate dehydrogenases family. LeuB type 1 subfamily. As to quaternary structure, homodimer. Requires Mg(2+) as cofactor. It depends on Mn(2+) as a cofactor.

It localises to the cytoplasm. It catalyses the reaction (2R,3S)-3-isopropylmalate + NAD(+) = 4-methyl-2-oxopentanoate + CO2 + NADH. Its pathway is amino-acid biosynthesis; L-leucine biosynthesis; L-leucine from 3-methyl-2-oxobutanoate: step 3/4. Catalyzes the oxidation of 3-carboxy-2-hydroxy-4-methylpentanoate (3-isopropylmalate) to 3-carboxy-4-methyl-2-oxopentanoate. The product decarboxylates to 4-methyl-2 oxopentanoate. The chain is 3-isopropylmalate dehydrogenase (leuB) from Thermus aquaticus.